Here is a 210-residue protein sequence, read N- to C-terminus: mRNA 3'-end-processing protein YTH1 (210 aa).

C3H1-type zinc fingers lie at residues 28–59, 61–88, 89–117, 118–142, and 143–169; these read DPDR…HVLP, FQNK…HEYN, LRKM…HVDH, KSQL…TKKH, and VKKV…HPKF.

The protein belongs to the CPSF4/YTH1 family.

It is found in the nucleus. Component of the cleavage factor I (CF I) involved in pre-mRNA 3'-end processing. In Kluyveromyces lactis (strain ATCC 8585 / CBS 2359 / DSM 70799 / NBRC 1267 / NRRL Y-1140 / WM37) (Yeast), this protein is mRNA 3'-end-processing protein YTH1 (YTH1).